Here is a 287-residue protein sequence, read N- to C-terminus: Elongation factor Ts (287 aa).

Positions 80–83 (TDFL) are involved in Mg(2+) ion dislocation from EF-Tu.

Belongs to the EF-Ts family.

Its subcellular location is the cytoplasm. Its function is as follows. Associates with the EF-Tu.GDP complex and induces the exchange of GDP to GTP. It remains bound to the aminoacyl-tRNA.EF-Tu.GTP complex up to the GTP hydrolysis stage on the ribosome. The chain is Elongation factor Ts from Pseudomonas fluorescens (strain SBW25).